The chain runs to 456 residues: Gamma-glutamyl phosphate reductase (456 aa).

Ser-2 is modified (N-acetylserine).

This sequence belongs to the gamma-glutamyl phosphate reductase family.

It carries out the reaction L-glutamate 5-semialdehyde + phosphate + NADP(+) = L-glutamyl 5-phosphate + NADPH + H(+). The protein operates within amino-acid biosynthesis; L-proline biosynthesis; L-glutamate 5-semialdehyde from L-glutamate: step 2/2. Functionally, catalyzes the NADPH dependent reduction of L-gamma-glutamyl 5-phosphate into L-glutamate 5-semialdehyde and phosphate. The product spontaneously undergoes cyclization to form 1-pyrroline-5-carboxylate. The polypeptide is Gamma-glutamyl phosphate reductase (PRO2) (Saccharomyces cerevisiae (strain ATCC 204508 / S288c) (Baker's yeast)).